A 196-amino-acid chain; its full sequence is Cell division protein SepF (196 aa).

Residues 15 to 80 (VEDDEEFNEP…PKRSASTFSK (66 aa)) are disordered. The segment covering 56–79 (RPAQSTPKPQAQTAAPKRSASTFS) has biased composition (polar residues).

It belongs to the SepF family. In terms of assembly, homodimer. Interacts with FtsZ.

The protein resides in the cytoplasm. Cell division protein that is part of the divisome complex and is recruited early to the Z-ring. Probably stimulates Z-ring formation, perhaps through the cross-linking of FtsZ protofilaments. Its function overlaps with FtsA. The sequence is that of Cell division protein SepF from Lactococcus lactis subsp. cremoris (strain SK11).